We begin with the raw amino-acid sequence, 419 residues long: Putative zinc metalloprotease spyM18_2031 (419 aa).

Position 18 (H18) interacts with Zn(2+). The active site involves E19. Zn(2+) is bound at residue H22. The next 4 helical transmembrane spans lie at 169-191, 301-323, 343-365, and 392-411; these read LITNFAGPMNNFILGIVVFILLV, LAWSGAFTILNALKGLITGFSLN, LESVLSLMAMLSINLGIFNLIPI, and AYITLAGVAIMVVLMIAVTW. The region spanning 175-274 is the PDZ domain; that stretch reads GPMNNFILGI…LKTVAVKPQK (100 aa).

It belongs to the peptidase M50B family. Zn(2+) is required as a cofactor.

The protein localises to the cell membrane. The polypeptide is Putative zinc metalloprotease spyM18_2031 (Streptococcus pyogenes serotype M18 (strain MGAS8232)).